Reading from the N-terminus, the 611-residue chain is Protein Spindly (611 aa).

Positions 1–288 (MEESETVLKL…QFQSLQKQHA (288 aa)) form a coiled coil. Basic and acidic residues predominate over residues 499–511 (LKEDSSLSTKEQD). Positions 499-611 (LKEDSSLSTK…PAATTQCPQQ (113 aa)) are disordered. The span at 549–567 (RNTNNCSVTSTSPRSASEE) shows a compositional bias: polar residues. Positions 570-583 (SESKRFDEEQEKRK) are enriched in basic and acidic residues.

The protein belongs to the Spindly family.

The protein localises to the chromosome. It is found in the centromere. Its subcellular location is the kinetochore. Functionally, required for the localization of dynein and dynactin to the mitotic kintochore. Dynein is believed to control the initial lateral interaction between the kinetochore and spindle microtubules and to facilitate the subsequent formation of end-on kinetochore-microtubule attachments mediated by the NDC80 complex. May act as an adapter protein linking the dynein motor complex to various cargos. This chain is Protein Spindly (spdl1), found in Xenopus tropicalis (Western clawed frog).